The primary structure comprises 532 residues: Pre-piRNA 3'-exonuclease trimmer (532 aa).

Mg(2+) is bound by residues Asp28, Glu30, Asp270, and Asp365. Residues 503–523 (AGRFAIWSGSIVTGGLALYLI) form a helical membrane-spanning segment.

It belongs to the CAF1 family. Interacts with Papi/Tdrkh; interaction takes place on the mitochondrial surface and recruits PNLDC1/trimmer to PIWI-bound pre-piRNAs. Requires Mg(2+) as cofactor.

It localises to the mitochondrion outer membrane. 3'-5' exonuclease that specifically cleaves precursor piRNAs (pre-piRNAs) at their 3' ends. Trims pre-piRNAs to their mature size, a process required for piRNAs maturation and stabilization, and subsequent pre-piRNAs 2'-O-methylation. The piRNA metabolic process mediates the repression of transposable elements during meiosis by forming complexes composed of piRNAs and Piwi proteins and govern the methylation and subsequent repression of transposons. This is Pre-piRNA 3'-exonuclease trimmer from Bombyx mori (Silk moth).